The primary structure comprises 1020 residues: Neurofilament heavy polypeptide (1020 aa).

The interval 1–100 (MMSFGGADAL…VATSRSEKEQ (100 aa)) is head. Positions 58–83 (VSASPSRFRGAGAASSTDSLDTLSNG) are disordered. A compositionally biased stretch (polar residues) spans 71–82 (ASSTDSLDTLSN). 2 positions are modified to phosphoserine: serine 76 and serine 124. In terms of domain architecture, IF rod spans 97 to 413 (EKEQLQALND…KLLEGEECRI (317 aa)). The segment at 101-132 (LQALNDRFAGYIDKVRQLEAHNRSLEGEAAAL) is coil 1A. Residues 133-145 (RQQQAGRSAMGEL) form a linker 1 region. Residues 146–244 (YEREVREMRG…QEEVGELLGQ (99 aa)) form a coil 1B region. Positions 245–266 (IQGSGAAQAQMQAETRDALKCD) are linker 12. The tract at residues 267 to 288 (VTSALREIRAQLEGHAVQSTLQ) is coil 2A. The tract at residues 289 to 292 (SEEW) is linker 2. Positions 293–413 (FRVRLDRLSE…KLLEGEECRI (121 aa)) are coil 2B. Serine 347 and serine 421 each carry phosphoserine. Residues 414 to 1020 (GFGPIPFSLP…ATEDKAAKGK (607 aa)) are tail. Positions 456–1020 (IVEEQTEETQ…ATEDKAAKGK (565 aa)) are disordered. Composition is skewed to acidic residues over residues 459–475 (EQTEETQVTEEVTEEEE) and 483–498 (GKEEEGGEEEEAEGGE). Residues serine 511, serine 526, serine 532, serine 540, serine 546, serine 552, serine 560, serine 566, serine 574, serine 580, serine 586, serine 594, serine 600, serine 606, serine 614, serine 620, serine 628, serine 634, serine 640, serine 648, serine 654, serine 662, serine 668, serine 676, serine 682, serine 690, serine 696, and serine 704 each carry the phosphoserine modification. A compositionally biased stretch (basic and acidic residues) spans 511–1020 (SPEKEAKSPV…ATEDKAAKGK (510 aa)). 4 tandem repeats follow at residues 525 to 530 (KSPAEA), 531 to 536 (KSPEKE), 539 to 544 (KSPAEV), and 545 to 550 (KSPEKA). Residues 525–826 (KSPAEAKSPE…KEEVKSPVKE (302 aa)) are 30 X 6 AA repeats of K-S-P-[AEPV]-[EAK]-[AEVK]. Repeat unit 5 spans residues 559–564 (KSPPEA). Tandem repeats lie at residues 573-578 (KSPAEV) and 579-584 (KSPEKA). Tandem repeats lie at residues 593 to 598 (KSPAEA) and 599 to 604 (KSPEKA). Repeat 10 spans residues 613–618 (KSPAEA). A run of 4 repeats spans residues 627–632 (KSPAEV), 633–638 (KSPEKA), 639–644 (KSPTKE), and 647–652 (KSPEKA). A run of 12 repeats spans residues 661-666 (KSPEKA), 667-672 (KSPVKA), 675-680 (KSPEKA), 681-686 (KSPVKA), 689-694 (KSPEKA), 695-700 (KSPVKE), 703-708 (KSPEKA), 709-714 (KSPVKE), 717-722 (KSPEKA), 723-728 (KSPVKE), 737-742 (KSPVKE), and 745-750 (KSPEKA). A phosphoserine mark is found at serine 718, serine 724, and serine 738. Phosphoserine occurs at positions 752 and 763. The stretch at 762-767 (KSPEAK) is repeat 27. Threonine 768 bears the Phosphothreonine mark. 3 repeat units span residues 786 to 791 (KSPVKE), 794 to 799 (KSPEKA), and 821 to 826 (KSPVKE). 4 positions are modified to phosphoserine: serine 787, serine 795, serine 822, and serine 888.

The protein belongs to the intermediate filament family. In terms of assembly, forms heterodimers with NEFL; which can further hetero-oligomerize (in vitro). Forms heterodimers with INA (in vitro). There are a number of repeats of the tripeptide K-S-P, NFH is phosphorylated on a number of the serines in this motif. It is thought that phosphorylation of NFH results in the formation of interfilament cross bridges that are important in the maintenance of axonal caliber. Post-translationally, phosphorylation seems to play a major role in the functioning of the larger neurofilament polypeptides (NF-M and NF-H), the levels of phosphorylation being altered developmentally and coincidentally with a change in the neurofilament function. In terms of processing, phosphorylated in the head and rod regions by the PKC kinase PKN1, leading to the inhibition of polymerization.

The protein resides in the cytoplasm. It localises to the cytoskeleton. The protein localises to the cell projection. Its subcellular location is the axon. In terms of biological role, neurofilaments usually contain three intermediate filament proteins: NEFL, NEFM, and NEFH which are involved in the maintenance of neuronal caliber. NEFH has an important function in mature axons that is not subserved by the two smaller NF proteins. May additionally cooperate with the neuronal intermediate filament proteins PRPH and INA to form neuronal filamentous networks. This is Neurofilament heavy polypeptide (NEFH) from Homo sapiens (Human).